The chain runs to 107 residues: Large ribosomal subunit protein uL24 (107 aa).

The protein belongs to the universal ribosomal protein uL24 family. In terms of assembly, part of the 50S ribosomal subunit.

Its function is as follows. One of two assembly initiator proteins, it binds directly to the 5'-end of the 23S rRNA, where it nucleates assembly of the 50S subunit. One of the proteins that surrounds the polypeptide exit tunnel on the outside of the subunit. The chain is Large ribosomal subunit protein uL24 from Fervidobacterium nodosum (strain ATCC 35602 / DSM 5306 / Rt17-B1).